Here is a 207-residue protein sequence, read N- to C-terminus: Large ribosomal subunit protein uL4 (207 aa).

The tract at residues 49 to 77 is disordered; it reads HAVKNRSAVRGGGKKPWRQKGTGRARQGS. A compositionally biased stretch (basic residues) spans 60-71; the sequence is GGKKPWRQKGTG.

This sequence belongs to the universal ribosomal protein uL4 family. Part of the 50S ribosomal subunit.

Its function is as follows. One of the primary rRNA binding proteins, this protein initially binds near the 5'-end of the 23S rRNA. It is important during the early stages of 50S assembly. It makes multiple contacts with different domains of the 23S rRNA in the assembled 50S subunit and ribosome. In terms of biological role, forms part of the polypeptide exit tunnel. This chain is Large ribosomal subunit protein uL4, found in Levilactobacillus brevis (strain ATCC 367 / BCRC 12310 / CIP 105137 / JCM 1170 / LMG 11437 / NCIMB 947 / NCTC 947) (Lactobacillus brevis).